Here is a 510-residue protein sequence, read N- to C-terminus: Probable cytosol aminopeptidase (510 aa).

Residues Lys-282 and Asp-287 each coordinate Mn(2+). The active site involves Lys-294. Residues Asp-305, Asp-364, and Glu-366 each contribute to the Mn(2+) site. The active site involves Arg-368.

This sequence belongs to the peptidase M17 family. Mn(2+) serves as cofactor.

The protein localises to the cytoplasm. The catalysed reaction is Release of an N-terminal amino acid, Xaa-|-Yaa-, in which Xaa is preferably Leu, but may be other amino acids including Pro although not Arg or Lys, and Yaa may be Pro. Amino acid amides and methyl esters are also readily hydrolyzed, but rates on arylamides are exceedingly low.. It catalyses the reaction Release of an N-terminal amino acid, preferentially leucine, but not glutamic or aspartic acids.. Presumably involved in the processing and regular turnover of intracellular proteins. Catalyzes the removal of unsubstituted N-terminal amino acids from various peptides. This Cupriavidus metallidurans (strain ATCC 43123 / DSM 2839 / NBRC 102507 / CH34) (Ralstonia metallidurans) protein is Probable cytosol aminopeptidase.